A 242-amino-acid chain; its full sequence is Small ribosomal subunit protein uS3 (242 aa).

Residues 39–110 (IRKFIHKKYG…QVRINVVEVE (72 aa)) enclose the KH type-2 domain. The disordered stretch occupies residues 216 to 242 (QTMPVGANPRRRASRRPQQFEDRSNEG). The segment covering 233–242 (QQFEDRSNEG) has biased composition (basic and acidic residues).

The protein belongs to the universal ribosomal protein uS3 family. Part of the 30S ribosomal subunit. Forms a tight complex with proteins S10 and S14.

In terms of biological role, binds the lower part of the 30S subunit head. Binds mRNA in the 70S ribosome, positioning it for translation. This Synechococcus sp. (strain CC9902) protein is Small ribosomal subunit protein uS3.